Consider the following 228-residue polypeptide: Protein boule (228 aa).

Residues 33–110 (NRIFVGGISG…RKLNIAPAIK (78 aa)) enclose the RRM domain. The DAZ domain maps to 151–178 (PAAGVPAIYPPSAMQYQPFYQYYSVPMN). A compositionally biased stretch (low complexity) spans 193–214 (PLLHSPTSNPHSPHSQSHPQSP). Residues 193–228 (PLLHSPTSNPHSPHSQSHPQSPCWSIEDLRDTLPRV) are disordered. The segment covering 219 to 228 (EDLRDTLPRV) has biased composition (basic and acidic residues).

It belongs to the RRM DAZ family. In terms of assembly, interacts with the translational regulator orb2. As to expression, testis specific.

It is found in the nucleus. It localises to the cytoplasm. Its function is as follows. RNA-binding protein that plays a central role in spermatogenesis. Required for meiotic entry and germline differentiation, at the transition between G2 and M phases of meiosis I. Acts by regulating translation of specific mRNAs, possibly by binding to their 3'-UTR. Essential for translation of twine (twe) mRNA. Required for the expression of various genes such as CG6784, CG17210, CG15841 scpr-B, scpr-C, and rho-6. In Drosophila melanogaster (Fruit fly), this protein is Protein boule (bol).